We begin with the raw amino-acid sequence, 190 residues long: MAKGLEKFNELVESFANLPTIGKKTAIRLAYHLCINNQIDGMKLAHNIENAIRFIKPCGQCGALSENELCEICSDEERNKNILCIVESPKDILTLEESQSYNGLYFVLDELNEEKLEKLKQIILKLNISELIFALTHSINSDATIFFIEDKFKGLNLTFSKIAQGIPSGVNLENVDLISLNKAMNFRTKI.

The segment at 58–73 (CGQCGALSENELCEIC) adopts a C4-type zinc-finger fold. Positions 81–167 (NILCIVESPK…TFSKIAQGIP (87 aa)) constitute a Toprim domain.

This sequence belongs to the RecR family.

In terms of biological role, may play a role in DNA repair. It seems to be involved in an RecBC-independent recombinational process of DNA repair. It may act with RecF and RecO. The protein is Recombination protein RecR of Campylobacter jejuni subsp. jejuni serotype O:6 (strain 81116 / NCTC 11828).